Here is a 646-residue protein sequence, read N- to C-terminus: Cysteine-rich receptor-like protein kinase 37 (646 aa).

An N-terminal signal peptide occupies residues Met1–Ala26. Gnk2-homologous domains lie at Gly27–Thr132 and Thr142–Tyr252. Residues Gly27 to Asn287 lie on the Extracellular side of the membrane. 4 N-linked (GlcNAc...) asparagine glycosylation sites follow: Asn62, Asn129, Asn169, and Asn180. Residues Ile288–Ser308 form a helical membrane-spanning segment. At Trp309–His646 the chain is on the cytoplasmic side. The Protein kinase domain maps to Phe345–Ile626. ATP is bound by residues Leu351–Val359 and Lys373. At Tyr418 the chain carries Phosphotyrosine. Asp470 (proton acceptor) is an active-site residue. Phosphoserine is present on Ser474. The residue at position 510 (Thr510) is a Phosphothreonine. A Phosphotyrosine modification is found at Tyr518.

Belongs to the protein kinase superfamily. Ser/Thr protein kinase family. CRK subfamily.

Its subcellular location is the membrane. The catalysed reaction is L-seryl-[protein] + ATP = O-phospho-L-seryl-[protein] + ADP + H(+). It carries out the reaction L-threonyl-[protein] + ATP = O-phospho-L-threonyl-[protein] + ADP + H(+). The protein is Cysteine-rich receptor-like protein kinase 37 (CRK37) of Arabidopsis thaliana (Mouse-ear cress).